We begin with the raw amino-acid sequence, 628 residues long: MSNGLPISIGRPCTHDSQRSLSAPNSRIHSGFNSLLDTDLPMVHSEGTSTPTQLLRHPNIWFGNLPPPPRRPQDNRDFSPLHPLVFPGHHSQLRHVHETQQVQQTCPGKLKLSGAEELPPAPQRQHSLPLHITRPSRFPHHFHARRPDVLPSVPDHGPVLAETKPRTSVRQPRSATRGPSFRPILLPKVVHVHDDPPHSSLRPRGSRSRQLQPTVRRPLLAPNQFHSPRQPPPLSDDPGILGPRPLAPNSTRDPPPRPITPGPSNTHGLRPLSVLPRASPRRGLLPNPRRHRTSTGHIPPTTTSRPTGPPSRLQRPVHLYQSSPHTPNFRPSSIRKDALLQTGPRLGHLECLGQPANLRTSERSPPTKRRLPRSSEPNRLPKPLPEATLAPSYRHRRSYPFLPNPPAALPSIAYTSSRGKIHHSLPKGALPKEGAPPPPRRLPSPAPHPQLPLRDLGRTPGFPTPPKTPTRTPESRITASPTDIAPLDSDPVLSVRTEVHAPERRTFMDPEALRSALASLPSPPRSVGIIHTAPQTVLPANPPSPTRHLPPTSPPWILQSPVGEDAIVDSEDDSISSFYSHDFDSPSGPLRSQSPSRFRLYLRSPSTSSGIEPWSPASYDYGSAPDTD.

5 disordered regions span residues 1–25, 141–332, 347–398, 418–507, and 535–628; these read MSNG…SAPN, HFHA…FRPS, GHLE…HRRS, RGKI…RRTF, and QTVL…PDTD. Over residues 299–312 the composition is skewed to low complexity; that stretch reads PPTTTSRPTGPPSR. Over residues 320–331 the composition is skewed to polar residues; it reads YQSSPHTPNFRP. Residues 434–450 are compositionally biased toward pro residues; the sequence is GAPPPPRRLPSPAPHPQ. The span at 497-507 shows a compositional bias: basic and acidic residues; the sequence is TEVHAPERRTF.

The protein belongs to the tymoviridae protein p69 family.

Acts as a suppressor of RNA-mediated gene silencing, also known as post-transcriptional gene silencing (PTGS), a mechanism of plant viral defense that limits the accumulation of viral RNAs. The protein is 69 kDa protein of Brassica.